The primary structure comprises 789 residues: Protein translocase subunit SecA (789 aa).

ATP-binding positions include Q85, 103–107 (GEGKT), and D492.

The protein belongs to the SecA family. As to quaternary structure, monomer and homodimer. Part of the essential Sec protein translocation apparatus which comprises SecA, SecYEG and auxiliary proteins SecDF. Other proteins may also be involved.

Its subcellular location is the cell membrane. The protein resides in the cytoplasm. The catalysed reaction is ATP + H2O + cellular proteinSide 1 = ADP + phosphate + cellular proteinSide 2.. Its function is as follows. Part of the Sec protein translocase complex. Interacts with the SecYEG preprotein conducting channel. Has a central role in coupling the hydrolysis of ATP to the transfer of proteins into and across the cell membrane, serving as an ATP-driven molecular motor driving the stepwise translocation of polypeptide chains across the membrane. The protein is Protein translocase subunit SecA of Limosilactobacillus fermentum (strain NBRC 3956 / LMG 18251) (Lactobacillus fermentum).